The chain runs to 153 residues: MLKEKVEKLAEKVFEENNSLFLISLDINSANHIKIVLDGDEGVSVNDCIMVSRGIEHNLDREEEDFSLEVTSAGVSEPLSMPRQYKKNIGRRLQVKTENDKFEADLLSADQNEIKLSWKAREPKPVGKGKVTVQKEVVLPYTDIVEAKVKITF.

The protein belongs to the RimP family.

The protein resides in the cytoplasm. Functionally, required for maturation of 30S ribosomal subunits. The chain is Ribosome maturation factor RimP from Christiangramia forsetii (strain DSM 17595 / CGMCC 1.15422 / KT0803) (Gramella forsetii).